Here is a 909-residue protein sequence, read N- to C-terminus: MISGLLKKLFGSRNDRLIRQYSQNVRKINALEPEIAALSDEALRGKTGEFRQRLADGATLNDLLPEAFAVVREAGKRVHGMRHFDVQLIGGMVLHDGKIAEMRTGEGKTLVATLAAYLNALPGKGVHVITVNDYLASRDAEMMGRIYGFLGLTTGCNLSRMGHAEKQLAYAADITYGTNNEFGFDYLRDNMVYATGERVQRGLNFAVVDEVDSILIDEARTPLIISGQAEDHTDLYLKMNQVAPLLKRQEGGLDDKDSVIEPGDYTVDLKAHQVLLTEQGHENAEQILVRIGLLPEGAGLYEPGNILLVHHLYAALRAHALYHKDQHYVVQNGEVVIVDEFTGRLMAGRRWSDGLHQAVEAKEGVRIQAENQTLASITFQNYFRMYGKLAGMTGTADTEAFEFHHIYGLETVVIPTNRPMVRKDENDKVYRTAKEKWEAVIADIADCVKRGQPVLVGTTSIETNEYLSGLLNKAKIAHQLLNAKQHDSEAQIVAQAGRPGVVTIATNMAGRGTDIVLGGNIEKPVSQVRDDDSVPAAEKESRIAALREEWRKVHEQVIAAGGLHIIGTERHESRRIDNQLRGRSGRQGDPGSSRFYLSLEDPLMKIFAGERLNAIMVRLKMPEGEAIEHGMVTRSLESAQRKVEQRNFDIRKQLLEYDDVANDQRKVIYQQRNELLETEDISETIQAMRQGVLHDLFRTYVPVDSVEDQWDIAGLEQALASDYLLKLPLLEWVKAEPNLDDEAILKRIIDAGEEAYAAKIAQVDAAAWHQFERNVMLQSLDTHWREHLAALDHLRQGIHLRGYAQKNPKQEYKREAFELFETLLDTVRADVSKLLMTVQIRTEAQLDEAEAPPEMENVQYHHADYDEALAAAAASTAETPVQGGPKVGRNDPCPCGSGKKYKHCHGKLS.

ATP is bound by residues glutamine 87, 105 to 109, and aspartate 514; that span reads GEGKT. The interval 879-909 is disordered; it reads TPVQGGPKVGRNDPCPCGSGKKYKHCHGKLS. Zn(2+)-binding residues include cysteine 893, cysteine 895, cysteine 904, and histidine 905. Basic residues predominate over residues 899–909; the sequence is KKYKHCHGKLS.

Belongs to the SecA family. In terms of assembly, monomer and homodimer. Part of the essential Sec protein translocation apparatus which comprises SecA, SecYEG and auxiliary proteins SecDF-YajC and YidC. It depends on Zn(2+) as a cofactor.

The protein resides in the cell inner membrane. It is found in the cytoplasm. The catalysed reaction is ATP + H2O + cellular proteinSide 1 = ADP + phosphate + cellular proteinSide 2.. Functionally, part of the Sec protein translocase complex. Interacts with the SecYEG preprotein conducting channel. Has a central role in coupling the hydrolysis of ATP to the transfer of proteins into and across the cell membrane, serving both as a receptor for the preprotein-SecB complex and as an ATP-driven molecular motor driving the stepwise translocation of polypeptide chains across the membrane. In Azoarcus sp. (strain BH72), this protein is Protein translocase subunit SecA.